Reading from the N-terminus, the 283-residue chain is Phosphatidylglycerol--prolipoprotein diacylglyceryl transferase (283 aa).

Helical transmembrane passes span 20 to 40, 60 to 80, 94 to 114, and 121 to 141; these read IGGF…IIGL, LVIW…VAFE, IWQG…AILV, and LSFW…QAIG. An a 1,2-diacyl-sn-glycero-3-phospho-(1'-sn-glycerol)-binding site is contributed by Arg142. A run of 3 helical transmembrane segments spans residues 183–203, 214–234, and 248–268; these read FLYE…LFFY, GTIT…IEGL, and QVVS…LYLL.

It belongs to the Lgt family.

The protein localises to the cell inner membrane. The enzyme catalyses L-cysteinyl-[prolipoprotein] + a 1,2-diacyl-sn-glycero-3-phospho-(1'-sn-glycerol) = an S-1,2-diacyl-sn-glyceryl-L-cysteinyl-[prolipoprotein] + sn-glycerol 1-phosphate + H(+). Its pathway is protein modification; lipoprotein biosynthesis (diacylglyceryl transfer). Catalyzes the transfer of the diacylglyceryl group from phosphatidylglycerol to the sulfhydryl group of the N-terminal cysteine of a prolipoprotein, the first step in the formation of mature lipoproteins. The sequence is that of Phosphatidylglycerol--prolipoprotein diacylglyceryl transferase from Synechocystis sp. (strain ATCC 27184 / PCC 6803 / Kazusa).